Reading from the N-terminus, the 471-residue chain is MKSDVETLNPTRVKFTVEVGYDELKPSLDKAYKTIAGQVQVPGFRKGKVPPRVIDQRFGRAAVLEEAVNDALPKFYQQAVEASDFLPLGQPTVDVSQAPDPKDGGDLKFSVEVDVRPVLELPDLESIAVTVDDLQVPEEEVETRLTALRERFGTLTGVDRPAADGDFVSIDLRAEIDGEEIETAKGISYRIGQGNMIEGLDEALTGVAAEGSTTFTAPLAGGERKGQDASITVTVQSVKERVLPEADDDFAQLASEFDTLEELRADLLSQVEQSKKFEQGLQARDKVLEKLLETVEVPVPESLVEAEIHAHLERESRLEDAEHRAEIEDSTRQAIRSQLLLDALADREEIGVEQGELIEYLVGQAQQYGMEPQQFVQMVDGAGQVPSMVSEVRRRKALAVAMEKATVTDASGNPVDLEELVGGTEEDDVTEDATEDVTEDAAPAEEGQTVDPTGDDEQAAAEATAEDPAKS.

The PPIase FKBP-type domain maps to 165-244 (GDFVSIDLRA…VQSVKERVLP (80 aa)). A disordered region spans residues 407 to 471 (VTDASGNPVD…EATAEDPAKS (65 aa)). Residues 416–443 (DLEELVGGTEEDDVTEDATEDVTEDAAP) are compositionally biased toward acidic residues.

Belongs to the FKBP-type PPIase family. Tig subfamily.

It localises to the cytoplasm. The enzyme catalyses [protein]-peptidylproline (omega=180) = [protein]-peptidylproline (omega=0). In terms of biological role, involved in protein export. Acts as a chaperone by maintaining the newly synthesized protein in an open conformation. Functions as a peptidyl-prolyl cis-trans isomerase. The sequence is that of Trigger factor from Kineococcus radiotolerans (strain ATCC BAA-149 / DSM 14245 / SRS30216).